Here is a 524-residue protein sequence, read N- to C-terminus: G1/S-specific cyclin-E (524 aa).

A disordered region spans residues 1–155 (MAGRKSSRTA…EESHEMVRLE (155 aa)). The segment covering 18 to 47 (KPERKSAILSPHDELRERLLETAIDMKENI) has biased composition (basic and acidic residues). Polar residues predominate over residues 48–62 (PQRNTRNSSVGSQKS). Composition is skewed to basic and acidic residues over residues 63–78 (DCSETRKRRSTKEGPA), 86–95 (KHRNGSREDS), and 146–155 (EESHEMVRLE).

The protein belongs to the cyclin family. Cyclin E subfamily. As to quaternary structure, interacts with a member of the CDK2/CDK protein kinases to form a serine/threonine kinase holoenzyme complex. The cyclin subunit imparts substrate specificity to the complex. Expressed dynamically in proliferating cells throughout development. Detectable in larval blast cells undergoing active proliferation that give rise to all tissue types, including germline, intestine, hypodermis, neurons, and muscle.

It localises to the nucleus. Its subcellular location is the cytoplasm. The protein resides in the cytoskeleton. The protein localises to the microtubule organizing center. It is found in the centrosome. It localises to the centriole. In terms of biological role, essential for the control of the cell cycle at the G1/S (start) transition. In association with cdk-2, regulates proliferation, quiescent state and cell fate during the development of several cell lineages. In the embryo, initiates the establishment of cell polarity through the recruitment of the centrosomal proteins spd-2 and spd-5 during prophase. During the development of the vulva, controls the onset of vulval cell terminal differentiation by controlling the duration of G1 phase. During hypoderm development at early larval stages, controls syncytial fate of seam cell daughter cells. Involved in the progression of cell division in the intestinal lineage in larvae, and in particular in endoreplication, a specific growth pathway in the intestinal epithelium, required for feeding and gut development in growing larvae. By controlling the activity of translational repressor gld-1, regulates the pool of germline stem cells and the size of the mitotic zone by preventing entry into meiosis. In addition, repression of expression by gld-1 prevents mitosis re-entry in meiotic germline cells. This is G1/S-specific cyclin-E from Caenorhabditis elegans.